A 269-amino-acid chain; its full sequence is Formamidopyrimidine-DNA glycosylase (269 aa).

Proline 2 serves as the catalytic Schiff-base intermediate with DNA. Glutamate 3 serves as the catalytic Proton donor. Catalysis depends on lysine 57, which acts as the Proton donor; for beta-elimination activity. 3 residues coordinate DNA: histidine 90, arginine 109, and lysine 150. Residues 235–269 form an FPG-type zinc finger; sequence LVYGKAGEPCPECGEPLQELKIGQRNTFFCNECQQ. The active-site Proton donor; for delta-elimination activity is arginine 259.

Belongs to the FPG family. Monomer. Requires Zn(2+) as cofactor.

The enzyme catalyses Hydrolysis of DNA containing ring-opened 7-methylguanine residues, releasing 2,6-diamino-4-hydroxy-5-(N-methyl)formamidopyrimidine.. It carries out the reaction 2'-deoxyribonucleotide-(2'-deoxyribose 5'-phosphate)-2'-deoxyribonucleotide-DNA = a 3'-end 2'-deoxyribonucleotide-(2,3-dehydro-2,3-deoxyribose 5'-phosphate)-DNA + a 5'-end 5'-phospho-2'-deoxyribonucleoside-DNA + H(+). Its function is as follows. Involved in base excision repair of DNA damaged by oxidation or by mutagenic agents. Acts as a DNA glycosylase that recognizes and removes damaged bases. Has a preference for oxidized purines, such as 7,8-dihydro-8-oxoguanine (8-oxoG). Has AP (apurinic/apyrimidinic) lyase activity and introduces nicks in the DNA strand. Cleaves the DNA backbone by beta-delta elimination to generate a single-strand break at the site of the removed base with both 3'- and 5'-phosphates. The chain is Formamidopyrimidine-DNA glycosylase from Vibrio parahaemolyticus serotype O3:K6 (strain RIMD 2210633).